The chain runs to 543 residues: Formin-binding protein 1-like (543 aa).

Residues 1 to 263 (MSWGTELWDQ…AAKSVDERRD (263 aa)) enclose the F-BAR domain. Coiled-coil stretches lie at residues 66–258 (FTSC…AKSV) and 334–426 (LEDF…QRSE). The region spanning 339–416 (HLPPEQRRKR…IHKNEGWLSE (78 aa)) is the REM-1 domain. The segment at 424–467 (RSERRHSAEANHLVAQGRESPEGSYTEDANQEGRVQPQHHAHPE) is disordered. The region spanning 479 to 540 (PAIGHCKSLY…PTSYIEITLE (62 aa)) is the SH3 domain.

Belongs to the FNBP1 family. In terms of assembly, homodimerizes, the dimers can polymerize end-to-end to form filamentous structures. Interacts with GTP-bound cdc42 and wasl/n-wasp.

The protein resides in the cytoplasm. It is found in the cytoskeleton. It localises to the cell cortex. The protein localises to the cytoplasmic vesicle. Its subcellular location is the cell membrane. Its function is as follows. Required to coordinate membrane tubulation with reorganization of the actin cytoskeleton during endocytosis. Essential for autophagy of intracellular bacterial pathogens. Promotes cdc42-induced actin polymerization by activating the wasl-waspip complex, the predominant form of wasl/n-wasp in cells. This chain is Formin-binding protein 1-like (fnbp1l), found in Xenopus laevis (African clawed frog).